Here is a 433-residue protein sequence, read N- to C-terminus: Serendipity locus protein delta (433 aa).

The 90-residue stretch at 1–90 (MDTCFFCGAV…TQKRLTTQLK (90 aa)) folds into the ZAD domain. C4, C7, C61, and C64 together coordinate Zn(2+). The disordered stretch occupies residues 141–162 (DTEIKREFVDEEEEEDDDDDDE). The segment covering 149–162 (VDEEEEEDDDDDDE) has biased composition (acidic residues). The Nuclear localization signal motif lies at 187–193 (PTKKRVK). 7 C2H2-type zinc fingers span residues 194–217 (QECT…SEEH), 223–245 (HICP…MNLH), 251–273 (KQCR…MRMH), 279–301 (YQCE…RLRH), 308–330 (IICS…TLIH), 337–359 (HYCS…MKTH), and 405–428 (GFCL…QFDH).

In terms of assembly, homodimer (via ZAD domain) in solution. Binds DNA as a homodimer. N-terminal regions of the protein are required, in addition to the zinc fingers, for the specificity of chromatin-binding. Predominantly localized to the sub- and supraesophagal ganglia and the ventral nerve cord in the embryo, after dorsal closure.

The protein resides in the nucleus. Transcriptional activator that controls bicoid gene expression during oogenesis. Found in transcriptionally active cells. Binds to specific sites on polytene chromosomes of third instar larvae. Binds to the consensus DNA sequence 5'-YTAGAGATGGRAA-3'. In Drosophila melanogaster (Fruit fly), this protein is Serendipity locus protein delta (Sry-delta).